The primary structure comprises 286 residues: Nucleotide-binding protein HAPS_0087 (286 aa).

An ATP-binding site is contributed by 8–15 (GRSGSGKS). Residue 56 to 59 (DVRN) participates in GTP binding.

It belongs to the RapZ-like family.

In terms of biological role, displays ATPase and GTPase activities. This is Nucleotide-binding protein HAPS_0087 from Glaesserella parasuis serovar 5 (strain SH0165) (Haemophilus parasuis).